The sequence spans 336 residues: NmrA-like family domain-containing oxidoreductase malD (336 aa).

Residues 12-17 (GGTGNQ), 40-44 (RDPTS), 61-62 (DG), 82-84 (TNS), Lys140, and 163-166 (FMEA) contribute to the NADP(+) site.

This sequence belongs to the NmrA-type oxidoreductase family.

Its function is as follows. NmrA-like family domain-containing oxidoreductase; part of the gene cluster that mediates the biosynthesis of malbrancheamide, a dichlorinated fungal indole alkaloid that belongs to a family of natural products containing a characteristic bicyclo[2.2.2]diazaoctane core. The first step of malbrancheamide biosynthesis involves coupling of L-proline and L-tryptophan by malG, a bimodular NRPS, to produce L-Pro-L-Trp aldehyde through reductive offloading. This compound undergoes spontaneous cyclization and dehydration to give a dienamine which is reverse prenylated at C-2 by malE. The other prenyltransferase present in the cluster, malB, displays modest activity, suggesting that may be a redundant gene in the pathway. Subsequently, a [4+2] Diels-Alder cyclo-addition catalyzed by the bifunctional enzyme malC forms the characteristic bicyclo[2.2.2]diazaoctane ring of premalbrancheamid. Finally, the flavin-dependent halogenase malA catalyzes the iterative dichlorination of the indole ring of premalbrancheamide to yield C-9 monochlorinated malbrancheamide B, C-8 monochlorinated isomalbrancheamide B, and dichlorinated malbrancheamide. MalA is also able to brominate premalbrancheamide at C-9 to yield malbrancheamide C, and, to a lesser extend, at C-8 to yield isomalbrancheamide C. Finally, malA can brominate C-9 monochlorinated malbrancheamide B at C-8 to yield malbrancheamide D, or C-8 monochlorinated isomalbrancheamide B at C-9 to produce isomalbrancheamide D. The protein is NmrA-like family domain-containing oxidoreductase malD of Malbranchea aurantiaca.